The primary structure comprises 499 residues: Membrane-associated tyrosine- and threonine-specific cdc2-inhibitory kinase (499 aa).

Met-1 carries the post-translational modification N-acetylmethionine. A disordered region spans residues Met-1–Pro-29. The span at Gly-16–Val-28 shows a compositional bias: pro residues. The residue at position 17 (Thr-17) is a Phosphothreonine. Residue Ser-40 is modified to Phosphoserine. A disordered region spans residues Lys-42–Pro-72. Residues Ser-94 and Ser-120 each carry the phosphoserine modification. The 250-residue stretch at Phe-110 to Leu-359 folds into the Protein kinase domain. ATP contacts are provided by residues Leu-116 to Val-124 and Lys-139. Residues Ser-143 and Ser-160 each carry the phosphoserine modification. Asp-233 (proton acceptor) is an active-site residue. Positions 238, 251, and 253 each coordinate Mg(2+). A Membrane-association motif motif is present at residues Leu-382–Ala-398. Residues Ala-398–Thr-499 are interaction with PIN1. Residue Ser-426 is modified to Phosphoserine; by PLK1. The interval Gly-437–Thr-499 is interaction with CDC2-CCNB1. A disordered region spans residues Gly-451–Pro-485. Phosphoserine occurs at positions 469, 473, and 482. A Phosphothreonine; by PLK1 modification is found at Thr-495.

It belongs to the protein kinase superfamily. Ser/Thr protein kinase family. WEE1 subfamily. In terms of assembly, interacts with CDC2-CCNB1 complex. Can also interact with PIN1 when phosphorylated by CDC2-CCNB1. Autophosphorylated. Phosphorylated by CDC2-CCNB1 complexes on undefined serine and threonine residues. The phosphorylation by CDC2-CCNB1 complexes may inhibit the catalytic activity.

It localises to the endoplasmic reticulum membrane. The protein resides in the golgi apparatus membrane. The catalysed reaction is L-seryl-[protein] + ATP = O-phospho-L-seryl-[protein] + ADP + H(+). It carries out the reaction L-threonyl-[protein] + ATP = O-phospho-L-threonyl-[protein] + ADP + H(+). With respect to regulation, negatively regulated by hyperphosphorylation during mitosis. The hyperphosphorylated form does not associate with CCNB1-CDC2 complexes. The PLK1 protein kinase may be required for mitotic phosphorylation. Functionally, acts as a negative regulator of entry into mitosis (G2 to M transition) by phosphorylation of the CDK1 kinase specifically when CDK1 is complexed to cyclins. Mediates phosphorylation of CDK1 predominantly on 'Thr-14'. Also involved in Golgi fragmentation. May be involved in phosphorylation of CDK1 on 'Tyr-15' to a lesser degree, however tyrosine kinase activity is unclear and may be indirect. This is Membrane-associated tyrosine- and threonine-specific cdc2-inhibitory kinase (PKMYT1) from Homo sapiens (Human).